An 83-amino-acid polypeptide reads, in one-letter code: uncharacterized protein (83 aa).

The next 3 helical transmembrane spans lie at 7–26 (FARF…IVSY), 36–58 (LSPL…ILPF), and 65–82 (ILTV…YLAF).

It localises to the cell membrane. This is an uncharacterized protein from Archaeoglobus fulgidus (strain ATCC 49558 / DSM 4304 / JCM 9628 / NBRC 100126 / VC-16).